A 459-amino-acid chain; its full sequence is Autophagy-related protein 18 (459 aa).

2 WD repeats span residues 1-39 (MTSPALNFITFNQDHSCLAVGTSKGFRIYHTDPFSRIFS) and 188-228 (AHRS…KLYQ). Residues 229 to 232 (FRRG) form a necessary for proper localization to vacuole membrane region. The short motif at 229–233 (FRRGT) is the L/FRRG motif element. A WD 3 repeat occupies 233 to 272 (TYPSTIYSMSFNLSSTLLCVSSTSDTIHIFRLGAPPGNTT). Positions 264 to 339 (LGAPPGNTTP…RGSGSFSSML (76 aa)) are disordered. Low complexity predominate over residues 265-277 (GAPPGNTTPAGAP). Residues 285–296 (RQDRWSRARSYD) are compositionally biased toward basic and acidic residues. A compositionally biased stretch (gly residues) spans 319-330 (PGAGNNQGGHTR). A WD 4 repeat occupies 393-433 (APGGPLRSVVAMSSSSPQVMVVTSDGGFYVYNIDMEHGGEG).

This sequence belongs to the WD repeat PROPPIN family. In terms of assembly, component of the PI(3,5)P2 regulatory complex. Interacts with ATG2 and ATG9. The ATG2-ATG18 complex is essential for autophagosome formation.

The protein localises to the preautophagosomal structure membrane. It is found in the vacuole membrane. It localises to the endosome membrane. Component of the PI(3,5)P2 regulatory complex that regulates both the synthesis and turnover of phosphatidylinositol 3,5-bisphosphate (PtdIns(3,5)P2). Plays an important role in osmotically-induced vacuole fragmentation. Required for cytoplasm to vacuole transport (Cvt) vesicle formation, pexophagy and starvation-induced autophagy. Involved in correct ATG9 trafficking to the pre-autophagosomal structure. With ATG2, protects ATG8 from ATG4-mediated cleavage. Autophagy is required for proper vegetative growth, asexual/sexual reproduction, and full virulence. Autophagy is particularly involved in the biosynthesis of deoxynivalenol (DON), an important virulence determinant. This chain is Autophagy-related protein 18, found in Gibberella zeae (strain ATCC MYA-4620 / CBS 123657 / FGSC 9075 / NRRL 31084 / PH-1) (Wheat head blight fungus).